The sequence spans 179 residues: 3-hydroxyanthranilate 3,4-dioxygenase (179 aa).

Arginine 47 contributes to the O2 binding site. The Fe cation site is built by histidine 51, glutamate 57, and histidine 96. Glutamate 57 contributes to the substrate binding site. Positions 100 and 110 each coordinate substrate. Fe cation contacts are provided by cysteine 125, cysteine 128, cysteine 162, and cysteine 165.

Belongs to the 3-HAO family. The cofactor is Fe(2+).

The enzyme catalyses 3-hydroxyanthranilate + O2 = (2Z,4Z)-2-amino-3-carboxymuconate 6-semialdehyde. It participates in cofactor biosynthesis; NAD(+) biosynthesis; quinolinate from L-kynurenine: step 3/3. Functionally, catalyzes the oxidative ring opening of 3-hydroxyanthranilate to 2-amino-3-carboxymuconate semialdehyde, which spontaneously cyclizes to quinolinate. The polypeptide is 3-hydroxyanthranilate 3,4-dioxygenase (Bacillus thuringiensis (strain Al Hakam)).